The following is a 180-amino-acid chain: Cell division protein ZapC (180 aa).

This sequence belongs to the ZapC family. In terms of assembly, interacts directly with FtsZ.

The protein localises to the cytoplasm. Functionally, contributes to the efficiency of the cell division process by stabilizing the polymeric form of the cell division protein FtsZ. Acts by promoting interactions between FtsZ protofilaments and suppressing the GTPase activity of FtsZ. The chain is Cell division protein ZapC from Vibrio cholerae serotype O1 (strain ATCC 39315 / El Tor Inaba N16961).